Reading from the N-terminus, the 319-residue chain is MATTKPYRVLLYYMYTTIENPEEFAAEHLEFCNSLELKGRILVAKEGINGTCSGTVEQTEKYMEAMNNDPRFDGIVFKIDEADGHAFKKMHVRPRPELVTLRLEDDINPHEITGKYLEPKDFYEAMKQEDTVIIDARNDYEFDLGHFKGAIKPDIESFRELPDWIRENKEVLEGKKILTYCTGGIRCEKFSGWLVREGYEDVSQLHGGIVTYGKDPEVQGELWDGQCYVFDERIAVPVNQKEHVIVGKDHFTGEPCERYVNCANPECNKKILCSEENEAKYLRACSHECRVSPRNRYVIQHELTEEQVAAALEQIEAGK.

A Rhodanese domain is found at lysine 127–glutamate 221. Cysteine 181 serves as the catalytic Cysteine persulfide intermediate.

Belongs to the TrhO family.

It carries out the reaction uridine(34) in tRNA + AH2 + O2 = 5-hydroxyuridine(34) in tRNA + A + H2O. Functionally, catalyzes oxygen-dependent 5-hydroxyuridine (ho5U) modification at position 34 in tRNAs. The chain is tRNA uridine(34) hydroxylase from Bacillus cereus (strain ZK / E33L).